Reading from the N-terminus, the 215-residue chain is UPF0502 protein PP_2442 (215 aa).

It belongs to the UPF0502 family.

In Pseudomonas putida (strain ATCC 47054 / DSM 6125 / CFBP 8728 / NCIMB 11950 / KT2440), this protein is UPF0502 protein PP_2442.